The primary structure comprises 158 residues: Sorbin and SH3 domain-containing protein 2 (158 aa).

The 46-residue stretch at 1–46 (MRAATPLQTVDRPKDWYKTMFKQIHMVHKPDDDTDMYNTPYTYNAG) folds into the SoHo domain. The disordered stretch occupies residues 28 to 158 (HKPDDDTDMY…TKPQAGRRKV (131 aa)). Residues 50–66 (SPYSAQSHPAAKTQTYR) are compositionally biased toward polar residues. A compositionally biased stretch (basic and acidic residues) spans 71 to 81 (SHSDNGTDAFK). The residue at position 73 (Ser73) is a Phosphoserine. Residues 86–99 (PVPPPHVPPPVPPL) show a composition bias toward pro residues. Residues 100–136 (RPRDRSSTEKHDWDPPDRKVDTRKFRSEPRSIFEYEP) are compositionally biased toward basic and acidic residues. The residue at position 153 (Ala153) is an Alanine amide.

Interacts with ABL1/c-Abl, ABL2/v-Abl/Arg, ACTN, AKT1, CBL, PALLD and PAK1. Interacts with ABL, CBL, DNM1, DNM2, FLOT1, AFDN, PTK2B/PYK2, SAPAP, SPTAN1, SYNJ1, SYNJ2, VCL/vinculin, and WASF. Interacts with PTPN12 and WASF1 via its SH3 domains; this interaction may mediate the partial PTPN12 and WASF1 translocation to focal adhesion sites. In terms of processing, ubiquitinated by CBL. Dephosphorylated by PTPN12. In terms of tissue distribution, expressed in duodenum.

Its subcellular location is the cytoplasm. It is found in the perinuclear region. It localises to the apical cell membrane. The protein resides in the cell junction. The protein localises to the focal adhesion. Its subcellular location is the cell projection. It is found in the lamellipodium. In terms of biological role, adapter protein that plays a role in the assembling of signaling complexes, being a link between ABL kinases and actin cytoskeleton. Can form complex with ABL1 and CBL, thus promoting ubiquitination and degradation of ABL1 or with AKT1 and PAK1, thus mediating AKT1-mediated activation of PAK1. May play a role in the regulation of pancreatic cell adhesion, possibly by acting on WASF1 phosphorylation, enhancing phosphorylation by ABL1, as well as dephosphorylation by PTPN12. Increases water and sodium absorption in the intestine and gall-bladder. The polypeptide is Sorbin and SH3 domain-containing protein 2 (SORBS2) (Sus scrofa (Pig)).